The primary structure comprises 427 residues: 3-phosphoshikimate 1-carboxyvinyltransferase (427 aa).

Positions 22, 23, and 27 each coordinate 3-phosphoshikimate. Lys-22 contacts phosphoenolpyruvate. Gly-96 and Arg-124 together coordinate phosphoenolpyruvate. Ser-170, Ser-171, Gln-172, Ser-198, Asp-314, Asn-337, and Lys-341 together coordinate 3-phosphoshikimate. Gln-172 lines the phosphoenolpyruvate pocket. The Proton acceptor role is filled by Asp-314. Phosphoenolpyruvate-binding residues include Arg-345, Arg-387, and Lys-412.

Belongs to the EPSP synthase family. In terms of assembly, monomer.

The protein localises to the cytoplasm. The catalysed reaction is 3-phosphoshikimate + phosphoenolpyruvate = 5-O-(1-carboxyvinyl)-3-phosphoshikimate + phosphate. It functions in the pathway metabolic intermediate biosynthesis; chorismate biosynthesis; chorismate from D-erythrose 4-phosphate and phosphoenolpyruvate: step 6/7. Its function is as follows. Catalyzes the transfer of the enolpyruvyl moiety of phosphoenolpyruvate (PEP) to the 5-hydroxyl of shikimate-3-phosphate (S3P) to produce enolpyruvyl shikimate-3-phosphate and inorganic phosphate. The sequence is that of 3-phosphoshikimate 1-carboxyvinyltransferase from Sulfurovum sp. (strain NBC37-1).